The chain runs to 284 residues: Deoxyribonuclease-1 (284 aa).

Positions 1–22 (MRYTGLMGTLLTLVNLLQLAGT) are cleaved as a signal peptide. An N-linked (GlcNAc...) asparagine glycan is attached at asparagine 40. Glutamate 100 is a catalytic residue. Residues cysteine 123 and cysteine 126 are joined by a disulfide bond. Asparagine 128 carries N-linked (GlcNAc...) asparagine glycosylation. The active site involves histidine 156. A disulfide bridge connects residues cysteine 195 and cysteine 231.

The protein belongs to the DNase I family. Ca(2+) serves as cofactor. Mg(2+) is required as a cofactor. N-glycosylated. Highly expressed in the parotid and submandibular gland as well as in the kidney and duodenum (at protein level). Expressed at intermediate level in the ileum, mesenterial lymph nodes, liver, ventral prostate, epididymis, ovary and stomach (at protein level). Expressed at low level in the sublingual, preputial, coagulation and pituitary gland (at protein level). Also present in the lachrymal and thyroid glands, striated muscle, intestine, the urinary bladder and the eye.

It localises to the secreted. It is found in the zymogen granule. Its subcellular location is the nucleus envelope. The catalysed reaction is Endonucleolytic cleavage to 5'-phosphodinucleotide and 5'-phosphooligonucleotide end-products.. Its function is as follows. Serum endocuclease secreted into body fluids by a wide variety of exocrine and endocrine organs. Expressed by non-hematopoietic tissues and preferentially cleaves protein-free DNA. Among other functions, seems to be involved in cell death by apoptosis. Binds specifically to G-actin and blocks actin polymerization. Together with DNASE1L3, plays a key role in degrading neutrophil extracellular traps (NETs). NETs are mainly composed of DNA fibers and are released by neutrophils to bind pathogens during inflammation. Degradation of intravascular NETs by DNASE1 and DNASE1L3 is required to prevent formation of clots that obstruct blood vessels and cause organ damage following inflammation. This is Deoxyribonuclease-1 from Mus musculus (Mouse).